Here is a 358-residue protein sequence, read N- to C-terminus: Peptide chain release factor 1 (358 aa).

Position 233 is an N5-methylglutamine (Gln-233).

It belongs to the prokaryotic/mitochondrial release factor family. Post-translationally, methylated by PrmC. Methylation increases the termination efficiency of RF1.

The protein resides in the cytoplasm. Its function is as follows. Peptide chain release factor 1 directs the termination of translation in response to the peptide chain termination codons UAG and UAA. This chain is Peptide chain release factor 1, found in Clostridium botulinum (strain Loch Maree / Type A3).